Here is a 218-residue protein sequence, read N- to C-terminus: 7-cyano-7-deazaguanine synthase 1 (218 aa).

Residue 9–19 (YSGGMDSFTVL) coordinates ATP. Zn(2+)-binding residues include Cys-185, Cys-193, Cys-196, and Cys-199.

This sequence belongs to the QueC family. It depends on Zn(2+) as a cofactor.

It carries out the reaction 7-carboxy-7-deazaguanine + NH4(+) + ATP = 7-cyano-7-deazaguanine + ADP + phosphate + H2O + H(+). It functions in the pathway purine metabolism; 7-cyano-7-deazaguanine biosynthesis. In terms of biological role, catalyzes the ATP-dependent conversion of 7-carboxy-7-deazaguanine (CDG) to 7-cyano-7-deazaguanine (preQ(0)). This Colwellia psychrerythraea (strain 34H / ATCC BAA-681) (Vibrio psychroerythus) protein is 7-cyano-7-deazaguanine synthase 1.